The following is a 79-amino-acid chain: Small ribosomal subunit protein uS17 (79 aa).

This sequence belongs to the universal ribosomal protein uS17 family. In terms of assembly, part of the 30S ribosomal subunit.

Functionally, one of the primary rRNA binding proteins, it binds specifically to the 5'-end of 16S ribosomal RNA. This chain is Small ribosomal subunit protein uS17, found in Bartonella quintana (strain Toulouse) (Rochalimaea quintana).